The primary structure comprises 320 residues: Cytochrome f (320 aa).

A signal peptide spans 1–35 (MENKNTFSWVKEQMTRSISVSIMIYVITQTSISNA). Residues Y36, C56, C59, and H60 each coordinate heme. Residues 286–306 (VQGLLFFFASVILAQVFLVLK) traverse the membrane as a helical segment.

It belongs to the cytochrome f family. In terms of assembly, the 4 large subunits of the cytochrome b6-f complex are cytochrome b6, subunit IV (17 kDa polypeptide, petD), cytochrome f and the Rieske protein, while the 4 small subunits are PetG, PetL, PetM and PetN. The complex functions as a dimer. It depends on heme as a cofactor.

The protein resides in the plastid. Its subcellular location is the chloroplast thylakoid membrane. In terms of biological role, component of the cytochrome b6-f complex, which mediates electron transfer between photosystem II (PSII) and photosystem I (PSI), cyclic electron flow around PSI, and state transitions. The sequence is that of Cytochrome f from Lolium perenne (Perennial ryegrass).